Reading from the N-terminus, the 179-residue chain is Large ribosomal subunit protein bL9 (179 aa).

It belongs to the bacterial ribosomal protein bL9 family.

Binds to the 23S rRNA. The chain is Large ribosomal subunit protein bL9 from Bartonella bacilliformis (strain ATCC 35685 / KC583 / Herrer 020/F12,63).